A 466-amino-acid chain; its full sequence is ATP synthase subunit beta, sodium ion specific (466 aa).

153 to 160 (GGAGVGKT) provides a ligand contact to ATP.

This sequence belongs to the ATPase alpha/beta chains family. F-type ATPases have 2 components, CF(1) - the catalytic core - and CF(0) - the membrane proton channel. CF(1) has five subunits: alpha(3), beta(3), gamma(1), delta(1), epsilon(1). CF(0) has three main subunits: a, b and c.

The protein localises to the cell membrane. The enzyme catalyses 4 Na(+)(in) + ATP + H2O = 4 Na(+)(out) + ADP + phosphate + H(+). Inhibited by nitrate. Produces ATP from ADP in the presence of a sodium ion gradient across the membrane. The beta chain is the catalytic subunit. This is ATP synthase subunit beta, sodium ion specific from Acetobacterium woodii (strain ATCC 29683 / DSM 1030 / JCM 2381 / KCTC 1655 / WB1).